A 365-amino-acid polypeptide reads, in one-letter code: Peptide chain release factor 2 (365 aa).

N5-methylglutamine is present on Gln-251.

This sequence belongs to the prokaryotic/mitochondrial release factor family. Post-translationally, methylated by PrmC. Methylation increases the termination efficiency of RF2.

The protein resides in the cytoplasm. In terms of biological role, peptide chain release factor 2 directs the termination of translation in response to the peptide chain termination codons UGA and UAA. In Campylobacter jejuni subsp. doylei (strain ATCC BAA-1458 / RM4099 / 269.97), this protein is Peptide chain release factor 2.